Here is a 193-residue protein sequence, read N- to C-terminus: Putative 3-methyladenine DNA glycosylase (193 aa).

Belongs to the DNA glycosylase MPG family.

The protein is Putative 3-methyladenine DNA glycosylase of Nitrosospira multiformis (strain ATCC 25196 / NCIMB 11849 / C 71).